A 434-amino-acid polypeptide reads, in one-letter code: Purple acid phosphatase 22 (434 aa).

A signal peptide spans 1–22; sequence MKLFGLFLSFTLLFLCPFISQA. N116 carries an N-linked (GlcNAc...) asparagine glycan. Residues D148, D175, and Y178 each coordinate Fe cation. D175 contacts Zn(2+). N208 and H292 together coordinate Zn(2+). N208 is a substrate binding site. H302 (proton donor) is an active-site residue. H329 is a Zn(2+) binding site. 329–331 serves as a coordination point for substrate; it reads HVH. H331 provides a ligand contact to Fe cation. N-linked (GlcNAc...) asparagine glycosylation is present at N403.

Belongs to the metallophosphoesterase superfamily. Purple acid phosphatase family. As to quaternary structure, homodimer. The cofactor is Fe cation. Requires Zn(2+) as cofactor. In terms of tissue distribution, expressed in roots, stems, leaves, flowers and siliques.

The protein localises to the secreted. It catalyses the reaction a phosphate monoester + H2O = an alcohol + phosphate. This is Purple acid phosphatase 22 (PAP22) from Arabidopsis thaliana (Mouse-ear cress).